The following is a 216-amino-acid chain: uncharacterized protein (216 aa).

The 52-residue stretch at 125–176 (YPKSTNFDSHYHDCDEYWVIIEGAGTVVVGSRSFEVEVGDCVAIGMGHHHDL) folds into the Cupin type-2 domain.

This is an uncharacterized protein from Sinorhizobium fredii (strain NBRC 101917 / NGR234).